The sequence spans 351 residues: Nicotinate-nucleotide--dimethylbenzimidazole phosphoribosyltransferase (351 aa).

The active-site Proton acceptor is glutamate 317.

This sequence belongs to the CobT family.

It carries out the reaction 5,6-dimethylbenzimidazole + nicotinate beta-D-ribonucleotide = alpha-ribazole 5'-phosphate + nicotinate + H(+). The protein operates within nucleoside biosynthesis; alpha-ribazole biosynthesis; alpha-ribazole from 5,6-dimethylbenzimidazole: step 1/2. Catalyzes the synthesis of alpha-ribazole-5'-phosphate from nicotinate mononucleotide (NAMN) and 5,6-dimethylbenzimidazole (DMB). The protein is Nicotinate-nucleotide--dimethylbenzimidazole phosphoribosyltransferase of Pseudomonas aeruginosa (strain UCBPP-PA14).